Here is a 53-residue protein sequence, read N- to C-terminus: Conotoxin Bu27 (53 aa).

Residues 1–12 constitute a propeptide that is removed on maturation; that stretch reads ASDGRNAVVHER. Position 14 is a 4-hydroxyproline (P14). A 4-carboxyglutamate modification is found at E15. O-linked (HexNAc...) threonine glycosylation is found at T19 and T21. 6 positions are modified to 4-hydroxyproline: P29, P34, P35, P43, P44, and P48. P48 is modified (proline amide). Positions 49–53 are excised as a propeptide; that stretch reads GRRND.

The protein belongs to the conotoxin A superfamily. In terms of processing, contains 3 disulfide bonds. In terms of tissue distribution, expressed by the venom duct.

It is found in the secreted. In terms of biological role, probable neurotoxin with ion channel inhibitor activity. This is Conotoxin Bu27 from Conus bullatus (Bubble cone).